A 100-amino-acid chain; its full sequence is MHLLPREQEKLMIVVAADLARRRQARGLKLNYPEAVAIISYELIEGARDGRTVAELMSYGTTLLRREDVMEGVPEMIHDVQIEATFPDGTKLVTVHNPIR.

It belongs to the urease gamma subunit family. As to quaternary structure, heterotrimer of UreA (gamma), UreB (beta) and UreC (alpha) subunits. Three heterotrimers associate to form the active enzyme.

The protein resides in the cytoplasm. The catalysed reaction is urea + 2 H2O + H(+) = hydrogencarbonate + 2 NH4(+). It participates in nitrogen metabolism; urea degradation; CO(2) and NH(3) from urea (urease route): step 1/1. The polypeptide is Urease subunit gamma (Paenarthrobacter aurescens (strain TC1)).